The chain runs to 299 residues: MPT51/MPB51 antigen (299 aa).

The first 26 residues, 1 to 26 (MKGRSALLRALWIAALSFGLGGVAVA), serve as a signal peptide directing secretion.

This sequence belongs to the mycobacterial A85 antigen family. As to quaternary structure, homodimer.

Its subcellular location is the secreted. Functionally, may have a role in host tissue attachment, whereby ligands may include the serum protein fibronectin and small sugars. The sequence is that of MPT51/MPB51 antigen (mpt51) from Mycobacterium bovis (strain ATCC BAA-935 / AF2122/97).